The primary structure comprises 207 residues: Methylated-DNA--protein-cysteine methyltransferase (207 aa).

Y123 and R137 together coordinate DNA. C154 serves as the catalytic Nucleophile; methyl group acceptor. Position 160 (S160) interacts with DNA.

The protein belongs to the MGMT family.

The protein localises to the nucleus. The catalysed reaction is a 6-O-methyl-2'-deoxyguanosine in DNA + L-cysteinyl-[protein] = S-methyl-L-cysteinyl-[protein] + a 2'-deoxyguanosine in DNA. It carries out the reaction a 4-O-methyl-thymidine in DNA + L-cysteinyl-[protein] = a thymidine in DNA + S-methyl-L-cysteinyl-[protein]. Involved in the cellular defense against the biological effects of O6-methylguanine (O6-MeG) and O4-methylthymine (O4-MeT) in DNA. Repairs the methylated nucleobase in DNA by stoichiometrically transferring the methyl group to a cysteine residue in the enzyme. This is a suicide reaction: the enzyme is irreversibly inactivated. The polypeptide is Methylated-DNA--protein-cysteine methyltransferase (MGT1) (Candida glabrata (strain ATCC 2001 / BCRC 20586 / JCM 3761 / NBRC 0622 / NRRL Y-65 / CBS 138) (Yeast)).